The following is a 454-amino-acid chain: Bifunctional protein GlmU (454 aa).

A pyrophosphorylase region spans residues 1 to 240 (MNVSVVILAA…EEEFMGVNSK (240 aa)). UDP-N-acetyl-alpha-D-glucosamine-binding positions include 8 to 11 (LAAG), lysine 22, and 87 to 88 (GT). Aspartate 119 is a Mg(2+) binding site. 4 residues coordinate UDP-N-acetyl-alpha-D-glucosamine: glycine 152, glutamate 166, asparagine 181, and asparagine 238. Mg(2+) is bound at residue asparagine 238. The linker stretch occupies residues 241–261 (IQLACAQEIMLQRLREKAMEQ). Residues 262 to 454 (GVIMNLPHTI…SDKNEEKKEQ (193 aa)) form an N-acetyltransferase region. Residues arginine 325 and lysine 342 each coordinate UDP-N-acetyl-alpha-D-glucosamine. Histidine 353 serves as the catalytic Proton acceptor. Positions 356 and 367 each coordinate UDP-N-acetyl-alpha-D-glucosamine. Residues alanine 370, 376–377 (NY), serine 395, alanine 413, and arginine 430 contribute to the acetyl-CoA site.

This sequence in the N-terminal section; belongs to the N-acetylglucosamine-1-phosphate uridyltransferase family. It in the C-terminal section; belongs to the transferase hexapeptide repeat family. Homotrimer. The cofactor is Mg(2+).

Its subcellular location is the cytoplasm. It carries out the reaction alpha-D-glucosamine 1-phosphate + acetyl-CoA = N-acetyl-alpha-D-glucosamine 1-phosphate + CoA + H(+). The enzyme catalyses N-acetyl-alpha-D-glucosamine 1-phosphate + UTP + H(+) = UDP-N-acetyl-alpha-D-glucosamine + diphosphate. Its pathway is nucleotide-sugar biosynthesis; UDP-N-acetyl-alpha-D-glucosamine biosynthesis; N-acetyl-alpha-D-glucosamine 1-phosphate from alpha-D-glucosamine 6-phosphate (route II): step 2/2. The protein operates within nucleotide-sugar biosynthesis; UDP-N-acetyl-alpha-D-glucosamine biosynthesis; UDP-N-acetyl-alpha-D-glucosamine from N-acetyl-alpha-D-glucosamine 1-phosphate: step 1/1. It participates in bacterial outer membrane biogenesis; LPS lipid A biosynthesis. Catalyzes the last two sequential reactions in the de novo biosynthetic pathway for UDP-N-acetylglucosamine (UDP-GlcNAc). The C-terminal domain catalyzes the transfer of acetyl group from acetyl coenzyme A to glucosamine-1-phosphate (GlcN-1-P) to produce N-acetylglucosamine-1-phosphate (GlcNAc-1-P), which is converted into UDP-GlcNAc by the transfer of uridine 5-monophosphate (from uridine 5-triphosphate), a reaction catalyzed by the N-terminal domain. The chain is Bifunctional protein GlmU from Helicobacter hepaticus (strain ATCC 51449 / 3B1).